The primary structure comprises 401 residues: Methionyl-tRNA formyltransferase, mitochondrial (401 aa).

Residues 1 to 26 constitute a mitochondrion transit peptide; sequence MVKMRRITPTRLLFTCRYISNNASPP. (6R)-10-formyltetrahydrofolate is bound by residues 18 to 20 and 66 to 70; these read YIS and VVTRS.

It belongs to the Fmt family. Post-translationally, phosphorylated by GCN2 in response to nutrient deprivation. Phosphorylation mediates retention of FMT1 in the cytoplasm.

It is found in the mitochondrion. Its subcellular location is the mitochondrion matrix. It localises to the cytoplasm. It catalyses the reaction L-methionyl-tRNA(fMet) + (6R)-10-formyltetrahydrofolate = N-formyl-L-methionyl-tRNA(fMet) + (6S)-5,6,7,8-tetrahydrofolate + H(+). Formylates methionyl-tRNA in mitochondria and the cytoplasm. Responsible for the formylation of the 8 N-terminally formylated (Nt-formylated) mitochondrial matrix proteins that are encoded by mitochondrial DNA. Nt-formylated proteins in the cytoplasm are strongly up-regulated in stationary phase or upon starvation for specific amino acids (His or Lys) and are targeted for degradation by a PSH1 E3 ubiquitin ligase-mediated fMet/N-end rule pathway. Increased Nt-formylation of cytosolic proteins appears to be important for adaptation to these stresses. Stationary phase-degraded Nt-formylated proteins include histone H3-like centromeric protein CSE4, Mediator complex subunit 3 (PGD1) and small ribosomal subunit protein uS8-A (RPS22A). The protein is Methionyl-tRNA formyltransferase, mitochondrial (FMT1) of Saccharomyces cerevisiae (strain ATCC 204508 / S288c) (Baker's yeast).